The following is a 359-amino-acid chain: Acyl-CoA Delta-9 desaturase (359 aa).

2 helical membrane passes run 51–71 and 74–94; these read VILF…AFTS and IATT…ITGG. Fe cation-binding residues include His96, His101, His133, His136, and His137. A Histidine box-1 motif is present at residues 96–101; that stretch reads HRLWAH. The short motif at 133-137 is the Histidine box-2 element; that stretch reads HRVHH. 2 helical membrane-spanning segments follow: residues 194–214 and 222–244; these read YLIL…VYMW and WFVA…NSAA. Positions 245, 274, 277, and 278 each coordinate Fe cation. Residues 274-278 carry the Histidine box-3 motif; sequence HNYHH.

Belongs to the fatty acid desaturase type 1 family. Fe(2+) serves as cofactor.

The protein resides in the membrane. The catalysed reaction is octadecanoyl-CoA + 2 Fe(II)-[cytochrome b5] + O2 + 2 H(+) = (9Z)-octadecenoyl-CoA + 2 Fe(III)-[cytochrome b5] + 2 H2O. The enzyme catalyses hexadecanoyl-CoA + 2 Fe(II)-[cytochrome b5] + O2 + 2 H(+) = (9Z)-hexadecenoyl-CoA + 2 Fe(III)-[cytochrome b5] + 2 H2O. Functionally, catalyzes the formation of a Delta9 double bond, acting on saturated fatty acyl substrates like palmitoyl-CoA (hexadecanoyl-CoA) and stearoyl-CoA (octadecanoyl-CoA) with higher desaturation activity on octadecanoyl-CoA than hexadecanoyl-CoA. The polypeptide is Acyl-CoA Delta-9 desaturase (Acheta domesticus (House cricket)).